The chain runs to 288 residues: ATP synthase gamma chain (288 aa).

The protein belongs to the ATPase gamma chain family. In terms of assembly, F-type ATPases have 2 components, CF(1) - the catalytic core - and CF(0) - the membrane proton channel. CF(1) has five subunits: alpha(3), beta(3), gamma(1), delta(1), epsilon(1). CF(0) has three main subunits: a, b and c.

Its subcellular location is the cell inner membrane. Its function is as follows. Produces ATP from ADP in the presence of a proton gradient across the membrane. The gamma chain is believed to be important in regulating ATPase activity and the flow of protons through the CF(0) complex. The polypeptide is ATP synthase gamma chain (Blochmanniella pennsylvanica (strain BPEN)).